We begin with the raw amino-acid sequence, 215 residues long: MRIGILGGTFDPIHYGHIRPAIEVKEALGLDKVLLMPNHIPPHKHQPNLSTAQRLKMVADVCAELAGFELCDIEANRDTPSYTVVTLEQLSTQYPNAELFFIMGMDSFIHLQSWHKWQQIFGFANLVLCQRPGWHLSNEHPMQQVLMARSAAIDTLKNPPQKHHPIHGRIFTVDITPQDISSTQIRSALAIGKIPTDALMPVTLNYIQKQQLYLS.

The protein belongs to the NadD family.

The enzyme catalyses nicotinate beta-D-ribonucleotide + ATP + H(+) = deamido-NAD(+) + diphosphate. Its pathway is cofactor biosynthesis; NAD(+) biosynthesis; deamido-NAD(+) from nicotinate D-ribonucleotide: step 1/1. Its function is as follows. Catalyzes the reversible adenylation of nicotinate mononucleotide (NaMN) to nicotinic acid adenine dinucleotide (NaAD). The protein is Probable nicotinate-nucleotide adenylyltransferase of Shewanella putrefaciens (strain CN-32 / ATCC BAA-453).